We begin with the raw amino-acid sequence, 362 residues long: Alternative oxidase, mitochondrial (362 aa).

The transit peptide at 1-64 (MNTPKVNILY…RGFTTTSVVR (64 aa)) directs the protein to the mitochondrion. The helical transmembrane segment at 156-176 (LVRFIFLESIAGVPGMVAGML) threads the bilayer. The Fe cation site is built by Glu-163, Glu-202, and His-205. The chain crosses the membrane as a helical span at residues 222–242 (LILGAQGVFFNAMFLSYLVSP). Positions 253, 310, and 313 each coordinate Fe cation.

This sequence belongs to the alternative oxidase family. The cofactor is Fe cation.

The protein resides in the mitochondrion inner membrane. In terms of biological role, catalyzes cyanide-resistant oxygen consumption. May increase respiration when the cytochrome respiratory pathway is restricted, or in response to low temperatures. This is Alternative oxidase, mitochondrial (aod-1) from Gelasinospora sp. (strain S23).